The following is a 694-amino-acid chain: MSDQEFDLSKIRNIGIMAHIDAGKTTTTERILYYAGRTHKIGEVHEGGATMDWMEQEQERGITITSAATTVFWLDCKINIIDTPGHVDFTIEVERSLRVLDGAVAVFDAVSGVEPQSETVWRQANKYGVPRIAFVNKMDRMGANYFAAVESMKEKLGANAIPVHCPIGAESQFVGMVDLISQKALYFLDETLGAKWEEREIPEDLKEKCAELRYALLEELATVDEGNEAFMMKVLEDPDSITEEEIHQVMRKGVIENKINPVLCGTAFKNKGVQQLLNVIVKWLPSPKDRGIIHGINLKNNEEVHLEPRKDGPLAALAFKIMTDPYVGRITFIRIYSGTLKKGSAILNSTKDKKERISRLLEMHANERTDRDEFTVGDIGACVGLKYSVTGDTLCDDNQEIVLERIEIPEPVIDMAIEPKSKGDREKLAQALNALSEEDPTFRVTSNEETGQTIISGMGELHLDILRDRMIREFKVEANVGKPQVSYKETITKNGSSETKYVKQSGGRGQYAHVCLEIEPNEPGKGNEVVSKIVGGVIPREYIPAVMKGVEEGLNTGVLAGYGLVDVKVSIVFGSYHEVDSSEMAFKICGSMAVKEACRKAAPVILEPIMKVAVTTPEDHLGDVIGDLNRRRGKILGQESSRSMAQVNAEVPLSEMFGYTTSLRSLTSGRATSTMEPAFFAKVPQKIQEEIVKK.

One can recognise a tr-type G domain in the interval 9–288 (SKIRNIGIMA…VIVKWLPSPK (280 aa)). Residues 18–25 (AHIDAGKT), 82–86 (DTPGH), and 136–139 (NKMD) each bind GTP.

It belongs to the TRAFAC class translation factor GTPase superfamily. Classic translation factor GTPase family. EF-G/EF-2 subfamily.

Its subcellular location is the cytoplasm. Its function is as follows. Catalyzes the GTP-dependent ribosomal translocation step during translation elongation. During this step, the ribosome changes from the pre-translocational (PRE) to the post-translocational (POST) state as the newly formed A-site-bound peptidyl-tRNA and P-site-bound deacylated tRNA move to the P and E sites, respectively. Catalyzes the coordinated movement of the two tRNA molecules, the mRNA and conformational changes in the ribosome. This Chlamydia caviae (strain ATCC VR-813 / DSM 19441 / 03DC25 / GPIC) (Chlamydophila caviae) protein is Elongation factor G.